Reading from the N-terminus, the 151-residue chain is Ribosome maturation factor RimP (151 aa).

The protein belongs to the RimP family.

Its subcellular location is the cytoplasm. Required for maturation of 30S ribosomal subunits. The sequence is that of Ribosome maturation factor RimP from Pasteurella multocida (strain Pm70).